We begin with the raw amino-acid sequence, 271 residues long: MTHAPIGIFDSGVGGLTVARAIMDQLPGEALRYVGDTANAPYGPRPLADIRARTLAITDSLVAEGVKMLVIACNSASAACLRDARERYDVPVVEVVLPAVRRAVATTRNGRVGVIGTQATITSRAYDDAFTAAPGVTLSTAACPRFADFVERGITSGRQVLGLAQAYLDPLQQADVDTLVLGCTHYPLLTGVLQLAMGDHVTLVSSAEETAKDVLRVLTEHDLLAEADGEPAHEFRATGSGESFAKLARRFLGPSLAADAIDPLAVSSSSA.

Substrate is bound by residues 10-11 (DS) and 42-43 (YG). Cysteine 73 (proton donor/acceptor) is an active-site residue. 74–75 (NS) contributes to the substrate binding site. Residue cysteine 183 is the Proton donor/acceptor of the active site. 184 to 185 (TH) contributes to the substrate binding site.

This sequence belongs to the aspartate/glutamate racemases family.

The enzyme catalyses L-glutamate = D-glutamate. It participates in cell wall biogenesis; peptidoglycan biosynthesis. Provides the (R)-glutamate required for cell wall biosynthesis. The polypeptide is Glutamate racemase (Saccharopolyspora erythraea (strain ATCC 11635 / DSM 40517 / JCM 4748 / NBRC 13426 / NCIMB 8594 / NRRL 2338)).